We begin with the raw amino-acid sequence, 997 residues long: Glutamate [NMDA] receptor subunit 1 (997 aa).

An N-terminal signal peptide occupies residues 1–26; that stretch reads MAVAEFVFCWPLFELAIVLLVAPIHA. Over 27 to 573 the chain is Extracellular; it reads AQRHTASDNP…TLVSFLQPFS (547 aa). N258, N314, N345, N397, N454, N481, and N501 each carry an N-linked (GlcNAc...) asparagine glycan. Glycine is bound by residues 530–532 and R537; that span reads PLT. Residues 574–594 form a helical membrane-spanning segment; the sequence is NTLWILVMVSVHVVALVLYLL. Topologically, residues 595–651 are cytoplasmic; it reads DRFSPFGRFKLSHSDSNEEKALNLSSAVWFAWGVLLNSGIGEGTPRSFSARVLGMVW. The helical transmembrane segment at 652-672 threads the bilayer; sequence AGFAMIIVASYTANLAAFLVL. Residues 673 to 831 lie on the Extracellular side of the membrane; that stretch reads ERPKTKLSGI…KTPNTLGLKN (159 aa). N-linked (GlcNAc...) asparagine glycosylation is present at N693. S703 and D747 together coordinate glycine. Residues 832–852 traverse the membrane as a helical segment; that stretch reads MAGVFILVGVGIAGGVGLIII. At 853 to 997 the chain is on the cytoplasmic side; it reads EVIYKKHQVK…YTSDVSHLVV (145 aa). The segment at 947–997 is disordered; it reads ELGKPGQSPKVMSANQPGMPMPMLGKTRPQQSVLPPRYSPGYTSDVSHLVV. A compositionally biased stretch (polar residues) spans 987–997; sequence GYTSDVSHLVV.

The protein belongs to the glutamate-gated ion channel (TC 1.A.10.1) family. As to quaternary structure, forms a heteromeric NMDA channel with Nmdar2.

The protein localises to the cell membrane. It localises to the postsynaptic cell membrane. It is found in the postsynaptic density. NMDA receptor subtype of glutamate-gated ion channels with high calcium permeability and voltage-dependent sensitivity to magnesium. Mediated by glycine. This protein plays a key role in synaptic plasticity, synaptogenesis, excitotoxicity, memory acquisition and learning. It mediates neuronal functions in glutamate neurotransmission. Is involved in the cell surface targeting of NMDA receptors. Plays a role in associative learning and in long-term memory consolidation. This Drosophila erecta (Fruit fly) protein is Glutamate [NMDA] receptor subunit 1.